We begin with the raw amino-acid sequence, 88 residues long: Small ribosomal subunit protein bS20 (88 aa).

Belongs to the bacterial ribosomal protein bS20 family.

In terms of biological role, binds directly to 16S ribosomal RNA. This Oenococcus oeni (strain ATCC BAA-331 / PSU-1) protein is Small ribosomal subunit protein bS20.